Here is a 357-residue protein sequence, read N- to C-terminus: Protein-glutamate methylesterase/protein-glutamine glutaminase 1 (357 aa).

A Response regulatory domain is found at 7 to 124 (KVLCVDDSAL…REGLLDYTQT (118 aa)). Asp58 carries the 4-aspartylphosphate modification. The region spanning 158–350 (LLSTEKLIIV…QRVMAHLATF (193 aa)) is the CheB-type methylesterase domain. Active-site residues include Ser170, His196, and Asp292.

Belongs to the CheB family. Phosphorylated by CheA. Phosphorylation of the N-terminal regulatory domain activates the methylesterase activity.

It is found in the cytoplasm. It catalyses the reaction [protein]-L-glutamate 5-O-methyl ester + H2O = L-glutamyl-[protein] + methanol + H(+). The catalysed reaction is L-glutaminyl-[protein] + H2O = L-glutamyl-[protein] + NH4(+). In terms of biological role, involved in chemotaxis. Part of a chemotaxis signal transduction system that modulates chemotaxis in response to various stimuli. Catalyzes the demethylation of specific methylglutamate residues introduced into the chemoreceptors (methyl-accepting chemotaxis proteins or MCP) by CheR. Also mediates the irreversible deamidation of specific glutamine residues to glutamic acid. The chain is Protein-glutamate methylesterase/protein-glutamine glutaminase 1 from Cupriavidus metallidurans (strain ATCC 43123 / DSM 2839 / NBRC 102507 / CH34) (Ralstonia metallidurans).